Reading from the N-terminus, the 465-residue chain is Paired box protein Pax-8 (465 aa).

A DNA-binding region (paired) is located at residues Gly-26–Lys-152. The PAI subdomain stretch occupies residues Gly-29 to Thr-85. The segment at Lys-104–Lys-152 is RED subdomain. Positions Pro-206 to Asp-227 are disordered.

Expression starts at late gastrula stages in cells fated to become the primordia of the otic system and the pronephric kidney. Expression is maintained in these two structures through late tailbud stages. Does not appear to be expressed in the thyroid gland.

It localises to the nucleus. Functionally, probable transcription factor. Involved in kidney development, acting synergistically with lhx1/lim-1 to establish the pronephric primordium in late gastrulae/early neurulae. The sequence is that of Paired box protein Pax-8 from Xenopus laevis (African clawed frog).